Consider the following 248-residue polypeptide: 1-(5-phosphoribosyl)-5-[(5-phosphoribosylamino)methylideneamino] imidazole-4-carboxamide isomerase (248 aa).

Residue Asp-8 is the Proton acceptor of the active site. The active-site Proton donor is Asp-131.

Belongs to the HisA/HisF family.

The protein localises to the cytoplasm. It carries out the reaction 1-(5-phospho-beta-D-ribosyl)-5-[(5-phospho-beta-D-ribosylamino)methylideneamino]imidazole-4-carboxamide = 5-[(5-phospho-1-deoxy-D-ribulos-1-ylimino)methylamino]-1-(5-phospho-beta-D-ribosyl)imidazole-4-carboxamide. Its pathway is amino-acid biosynthesis; L-histidine biosynthesis; L-histidine from 5-phospho-alpha-D-ribose 1-diphosphate: step 4/9. The chain is 1-(5-phosphoribosyl)-5-[(5-phosphoribosylamino)methylideneamino] imidazole-4-carboxamide isomerase from Paracidovorax citrulli (strain AAC00-1) (Acidovorax citrulli).